The primary structure comprises 313 residues: tRNA pseudouridine synthase B (313 aa).

D42 acts as the Nucleophile in catalysis.

The protein belongs to the pseudouridine synthase TruB family. Type 1 subfamily.

The enzyme catalyses uridine(55) in tRNA = pseudouridine(55) in tRNA. Its function is as follows. Responsible for synthesis of pseudouridine from uracil-55 in the psi GC loop of transfer RNAs. In Prochlorococcus marinus (strain SARG / CCMP1375 / SS120), this protein is tRNA pseudouridine synthase B.